Here is a 356-residue protein sequence, read N- to C-terminus: Chitin elicitor-binding protein (356 aa).

A signal peptide spans 1–28; it reads MASLTAALATPAAAALLLLVLLAAPASA. N30 is a glycosylation site (N-linked (GlcNAc...) asparagine). Disulfide bonds link C33/C100, C41/C164, C98/C162, and C100/C164. Chitin is bound at residue 50–51; that stretch reads PN. N-linked (GlcNAc...) asparagine glycosylation is found at N63 and N89. LysM domains lie at 111 to 158 and 175 to 219; these read PIYV…TLWI and LAYS…ILDV. Residues 117 to 123, N142, 145 to 152, T155, and G182 contribute to the chitin site; these read PQDGLDA and PDPNKINV. An N-linked (GlcNAc...) asparagine glycan is attached at N151. N184 carries an N-linked (GlcNAc...) asparagine glycan. Chitin contacts are provided by residues S186 and 211–213; that span reads LQM. Disulfide bonds link C224-C257 and C252-C274. N-linked (GlcNAc...) asparagine glycosylation is found at N265, N281, N290, N306, and N319. Residues 336-356 form a helical membrane-spanning segment; that stretch reads RSMWSMSVISFHMVLIIICFL.

As to quaternary structure, forms homooligomer. Interacts with CERK1. Binds to chitin oligosaccharide elicitor. Interacts with LYP4 and LYP6. Post-translationally, N-glycosylated. In terms of tissue distribution, expressed in seedlings, roots, shoots, stems and flowers.

The protein resides in the cell membrane. Its function is as follows. Chitin elicitor-binding protein involved in the perception and transduction of chitin oligosaccharide elicitor signal for defense responses. The sequence is that of Chitin elicitor-binding protein from Oryza sativa subsp. japonica (Rice).